The chain runs to 1664 residues: MYND-type zinc finger-containing chromatin reader Zmynd8 (1664 aa).

3 stretches are compositionally biased toward low complexity: residues 1–16, 30–40, and 61–84; these read MEST…SLKS, SPQPQLQSSSL, and SAPP…INVG. 3 disordered regions span residues 1–84, 251–271, and 295–323; these read MEST…INVG, SLSN…LRSE, and LALN…KTPE. Basic and acidic residues predominate over residues 258–271; the sequence is NDDKGPRRSNLRSE. Residues 296–308 are compositionally biased toward polar residues; sequence ALNTSGEGESSLF. Low complexity predominate over residues 309-320; that stretch reads SDASDTKTTTAK. The PHD-type zinc finger occupies 343-389; it reads DPFCWKCRGCGKLMPCSKCLRSFHSYCVRPATTKFDSSWKCPECQVI. Positions 346, 349, 358, 361, 366, 369, 383, and 386 each coordinate Zn(2+). Residues 401-504 form the Bromo domain; sequence VSVDLLSQLL…KVCRQEANEI (104 aa). Residues C507, C510, and C525 each contribute to the Zn(2+) site. A PWWP domain is found at 528 to 579; the sequence is PHLLLWAKLKGFPYWPAKAMGSSNSTLVNVRFFGKHDRAFVPVKDCFLYSAQ. Disordered stretches follow at residues 672-693, 747-815, 857-905, and 919-1139; these read KTKA…KKLS, ESVE…QNEN, KIPR…RQQE, and TEVM…TNTS. Over residues 676-690 the composition is skewed to polar residues; that stretch reads TESGNESDQSPSPTK. Basic residues predominate over residues 775 to 784; the sequence is HKRKSKHARK. Residues 785–800 are compositionally biased toward basic and acidic residues; that stretch reads QHDNQDNQIEEAEKTG. Pro residues predominate over residues 874-884; it reads IPLPTAPPPKQ. The segment covering 935 to 952 has biased composition (polar residues); it reads PANQPQTDQVPLQQETIT. The segment covering 953–962 has biased composition (low complexity); that stretch reads AQPESQMPAA. Positions 1006-1019 are enriched in pro residues; it reads PPMPLPMPPPPPLP. The segment covering 1037 to 1053 has biased composition (polar residues); the sequence is TTIQRVSQKQGGKSTDT. Low complexity predominate over residues 1073–1097; it reads SPTHSPLLSTAPSPSASPKPTSTLA. Zn(2+) is bound by residues C1399, C1402, C1410, C1411, C1417, C1421, H1429, and C1433. The MYND-type zinc-finger motif lies at 1399–1433; that stretch reads CANCMREAQLYCCWNTSYCDYPCQQLHWPGHSATC. A disordered region spans residues 1613–1648; that stretch reads VPKATGRSGKNNSRMRQTYSNNINNSNPQGMRCNNN. A compositionally biased stretch (polar residues) spans 1620–1648; that stretch reads SGKNNSRMRQTYSNNINNSNPQGMRCNNN.

Its subcellular location is the nucleus. It localises to the chromosome. Chromatin reader that recognizes specific histone signatures to regulate transcription. Plays a role in neuronal development. This Drosophila melanogaster (Fruit fly) protein is MYND-type zinc finger-containing chromatin reader Zmynd8.